The primary structure comprises 448 residues: Probable protein phosphatase 2C 74 (448 aa).

A disordered region spans residues Met-1–Glu-48. Residue Gly-2 is the site of N-myristoyl glycine attachment. Basic residues predominate over residues Gly-27–Pro-37. In terms of domain architecture, PPM-type phosphatase spans Thr-67–Leu-384. The Mn(2+) site is built by Asp-103, Gly-104, Asp-329, and Asp-375. Residues His-401 to Val-431 form a disordered region. Low complexity predominate over residues Asp-412–Pro-426.

This sequence belongs to the PP2C family. In terms of assembly, interacts with KIN10. Mg(2+) is required as a cofactor. Requires Mn(2+) as cofactor. As to expression, expressed in the whole plant.

Its subcellular location is the cell membrane. It carries out the reaction O-phospho-L-seryl-[protein] + H2O = L-seryl-[protein] + phosphate. It catalyses the reaction O-phospho-L-threonyl-[protein] + H2O = L-threonyl-[protein] + phosphate. Functionally, acts as a protein phosphatase. The sequence is that of Probable protein phosphatase 2C 74 from Arabidopsis thaliana (Mouse-ear cress).